The chain runs to 447 residues: M-phase inducer phosphatase 3 (447 aa).

Ser2 bears the N-acetylserine mark. Residues Ser20, Ser38, Ser56, Ser60, and Ser63 each carry the phosphoserine modification. Thr66 is modified (phosphothreonine; by CDK1). The segment covering 81 to 90 (MSASPLTTSA) has biased composition (polar residues). The segment at 81-109 (MSASPLTTSADLEDNGSLDSSGPLDRQLT) is disordered. A Phosphoserine modification is found at Ser128. Thr129 is modified (phosphothreonine). Residue Ser192 is modified to Phosphoserine; by CDK1. A phosphoserine; by PLK3 mark is found at Ser213 and Ser220. One can recognise a Rhodanese domain in the interval 294-401 (VIERFYIIDC…FFPEYMELCD (108 aa)). Cys350 is an active-site residue. Residue Ser445 is modified to Phosphoserine.

Belongs to the MPI phosphatase family. In terms of assembly, interacts with MAPK14 and 14-3-3 proteins. When phosphorylated on Ser-128 and/or Thr-129, interacts with PLK1. Interacts with MARK3/C-TAK1. Post-translationally, phosphorylated by PLK4. Phosphorylated by PLK1, leading to activate the phosphatase activity. Phosphorylated by CHEK1 and MAPKAPK2. This phosphorylation creates a binding site for 14-3-3 protein and inhibits the phosphatase activity. Phosphorylation by PLK3 at Ser-213 promotes nuclear translocation. Ser-220 is a minor phosphorylation site. Phosphorylation by CDK1 occurs at G2 and G2-M transition and leads to increased activity. In terms of tissue distribution, spleen and thymus.

Its subcellular location is the nucleus. The catalysed reaction is O-phospho-L-tyrosyl-[protein] + H2O = L-tyrosyl-[protein] + phosphate. Functions as a dosage-dependent inducer in mitotic control. Tyrosine protein phosphatase required for progression of the cell cycle. When phosphorylated, highly effective in activating G2 cells into prophase. Directly dephosphorylates CDK1 and activates its kinase activity. The chain is M-phase inducer phosphatase 3 (Cdc25c) from Mus musculus (Mouse).